The primary structure comprises 264 residues: Leukocyte receptor cluster member 1 (264 aa).

2 disordered regions span residues 1–37 and 49–76; these read MNILPKKSWHVRNKDNVARVRRDEAQAREEEKERERR and FLRKKARHQNSLPELEAAEAGAPGSGPV. Positions 12–37 are enriched in basic and acidic residues; the sequence is RNKDNVARVRRDEAQAREEEKERERR. Positions 16-46 form a coiled coil; that stretch reads NVARVRRDEAQAREEEKERERRVLLAQQEAR. Serine 59 carries the phosphoserine modification. Positions 59–75 are enriched in low complexity; it reads SLPELEAAEAGAPGSGP. The stretch at 89-115 forms a coiled coil; that stretch reads VIRGNKEYKEEKRQEKERQEKALGILT. The disordered stretch occupies residues 118–264; sequence GQSAAEAQTQ…PRQQDPHLTH (147 aa). Basic and acidic residues-rich tracts occupy residues 146-162 and 170-214; these read PDEKIKSRLDPLREMQK and HGGD…RSRA. A coiled-coil region spans residues 196–222; the sequence is LDQLRAERLRREAAERSRAEALLARVQ. A Phosphoserine modification is found at serine 245.

This Homo sapiens (Human) protein is Leukocyte receptor cluster member 1 (LENG1).